A 420-amino-acid polypeptide reads, in one-letter code: MRYDVVIIGGGLAGLTCGIRLAEQGKRCAIVSAGQNALHFSSGALDLLSHLPDGQPVSQPLEALDELARQAPHHPYSRMGAAAVAALLPQVEALLERSTISLLGSYQQNHWRMTPLGKFRACWLSPVDGVTRGLPDSRFGDNPLIAGIEGFLDFQSRIVAGTLQAQGIAARSDDLKLPVLDRLRQNPSEFRAVNIARVLDRPENRAALVEELSLLANGNDAIIMPACLGLDSPEVVGELAEALGKPISLLPTLPPSVLGLRLHQALSQRFRQLGGMVMPGDRAVRASLSAQEIAVHSHHHRDIPLRAKYAVLASGSFFSNGLVTQFDRVTEPVFGLDVRFAEQREGWSQQDVFVPQPYMQFGAIVDEHLHPRIGGETIGNLYAIGAVLEGFDPIAQGCGAGVSLLSALHVAEQILKEGNL.

Belongs to the anaerobic G-3-P dehydrogenase subunit B family. As to quaternary structure, composed of a catalytic GlpA/B dimer and of membrane bound GlpC. It depends on FMN as a cofactor.

It catalyses the reaction a quinone + sn-glycerol 3-phosphate = dihydroxyacetone phosphate + a quinol. The protein operates within polyol metabolism; glycerol degradation via glycerol kinase pathway; glycerone phosphate from sn-glycerol 3-phosphate (anaerobic route): step 1/1. Its function is as follows. Conversion of glycerol 3-phosphate to dihydroxyacetone. Uses fumarate or nitrate as electron acceptor. This Pectobacterium carotovorum subsp. carotovorum (strain PC1) protein is Anaerobic glycerol-3-phosphate dehydrogenase subunit B.